Consider the following 419-residue polypeptide: Serine hydroxymethyltransferase (419 aa).

(6S)-5,6,7,8-tetrahydrofolate contacts are provided by residues leucine 121 and 125–127 (GHL). The residue at position 229 (lysine 229) is an N6-(pyridoxal phosphate)lysine. Residue 354–356 (SPF) participates in (6S)-5,6,7,8-tetrahydrofolate binding.

Belongs to the SHMT family. Homodimer. The cofactor is pyridoxal 5'-phosphate.

It localises to the cytoplasm. It carries out the reaction (6R)-5,10-methylene-5,6,7,8-tetrahydrofolate + glycine + H2O = (6S)-5,6,7,8-tetrahydrofolate + L-serine. It participates in one-carbon metabolism; tetrahydrofolate interconversion. It functions in the pathway amino-acid biosynthesis; glycine biosynthesis; glycine from L-serine: step 1/1. Its function is as follows. Catalyzes the reversible interconversion of serine and glycine with tetrahydrofolate (THF) serving as the one-carbon carrier. This reaction serves as the major source of one-carbon groups required for the biosynthesis of purines, thymidylate, methionine, and other important biomolecules. Also exhibits THF-independent aldolase activity toward beta-hydroxyamino acids, producing glycine and aldehydes, via a retro-aldol mechanism. The polypeptide is Serine hydroxymethyltransferase (Coxiella burnetii (strain CbuK_Q154) (Coxiella burnetii (strain Q154))).